The sequence spans 146 residues: MSVLNESEALAPSFSTKDKYLCLTICGYRKPGMSEGDYRNHMVNVSAPMTKDLMVKYGVKRWTQIHNQSATRALMSQLFDPQMCNLADFDCFSQVFFRNIDDYKRMKLDPWYKKHLMHDHEVFADTKRSMMTIGWVEEFNGFENVL.

The 96-residue stretch at 31 to 126 (PGMSEGDYRN…MHDHEVFADT (96 aa)) folds into the EthD domain.

The protein belongs to the tpcK family.

The enzyme catalyses atrochrysone carboxylate + H(+) = atrochrysone + CO2. It participates in secondary metabolite biosynthesis. Decarboxylase; part of the gene cluster that mediates the biosynthesis of the dimeric xanthones cryptosporioptides. The pathway begins with the synthesis of atrochrysone thioester by the polyketide synthase dmx-nrPKS. The atrochrysone carboxyl ACP thioesterase dmxR1 then breaks the thioester bond and releases the atrochrysone carboxylic acid from dmx-nrPKS. Atrochrysone carboxylic acid is decarboxylated by the decarboxylase dmxR15, and oxidized by the anthrone oxygenase dmxR16 to yield emodin. Emodin is then reduced to emodin hydroquinone by the oxidoreductase dmxR7. A-ring reduction by the short chain dehydrogenase dmxR18, dehydration by the scytalone dehydratase-like protein dmxR17 and probable spontaneous re-oxidation, results in overall deoxygenation to chrysophanol. Baeyer-Villiger oxidation by the Baeyer-Villiger monooxygenase (BVMO) dmxR6 then yields monodictylactone in equilibrium with monodictyphenone. In the case of the cryptosporioptides biosynthesis, monodictylactone is reduced at C-12 to an alcohol (by the short chain dehydrogenases dmxR12 or dmxR8) and hydroxylated at C-5 by dmxR9, yielding the electron-rich aromatic which could eliminate H(2)O to form the ortho-quinonemethide, followed by tautomerisation to paraquinone and complete the formal reduction to produce the 10-methylgroup. Conjugate addition of C-4a-OH to the resulting paraquinone by the monooxygenase dmxR10 then gives cyclohexadienone, which is then reduced at C-5 by the short chain dehydrogenase dmxR3 to give the dihydroxanthone. The 6,7-epoxide in the cryptosporioptides could be introduced by the cytochrome P450 monooxygenase dmxL3. The highly reducing PKS dmxL2 manufactures butyrate, which is further carboxylated by dmxL1 to form ethylmalonate. It is not yet clear whether the carboxylation occurs while the butyrate is attached to the ACP of dmxL2, but this unusual fungal metabolite could then be esterified to O-5 by the O-acetyltransferase dmxR13. Finally, dimerization performed by dmxR5 gives the observed dimers cryptosporioptides A, B and C as the final products of the pathway. This chain is Decarboxylase dmxR15, found in Cryptosporiopsis sp. (strain 8999).